A 144-amino-acid polypeptide reads, in one-letter code: Large ribosomal subunit protein uL16 (144 aa).

This sequence belongs to the universal ribosomal protein uL16 family. As to quaternary structure, part of the 50S ribosomal subunit.

In terms of biological role, binds 23S rRNA and is also seen to make contacts with the A and possibly P site tRNAs. The chain is Large ribosomal subunit protein uL16 from Enterococcus faecalis (strain ATCC 700802 / V583).